We begin with the raw amino-acid sequence, 606 residues long: MDSQRELAEELRLYQSTLLQDGLKDLLEEKKFIDCTLKAGDKSFPCHRLILSACSPYFREYFLSEIEEEKKKEVALDNVDPAILDLIIKYLYSASIDLNDGNVQDIFALSSRFQIPSVFTVCVSYLQKRLAPGNCLAILRLGLLLDCPRLAISAREFVSDRFVQICKEEDFMQLSPQELISVISNDSLNVEKEEVVFEAVMKWVRTDKENRAKNLSEVFDCIRFRLMAEKYFKDHVEKDDIIKSNPEVQKKIKVLKDAFAGKLPEPSKNAEKAGAGEVNGDVGDEDLLPGYLNDIPRHGMFVKDLILLVNDTAAVAYDPMENECYLTALAEQIPRNHSSLVTQQNQVYVVGGLYVDEENKDQPLQSYFFQLDNVTSEWVGLPPLPSARCLFGLGEVDDKIYVVAGKDLQTEASLDSVLCYDPVAAKWSEVKNLPIKVYGHNVISHNGMIYCLGGKTDDKKCTNRVFIYNPKKGDWKDLAPMKTPRSMFGVAIHKGKIVIAGGVTEDGLSASVEAFDLKTNKWEVMTEFPQERSSISLVSLAGALYAIGGFAMIQLESKEFAPTEVNDIWKYEDDKKEWAGMLKEIRYASGASCLATRLNLFKLSKL.

Serine 3 carries the post-translational modification Phosphoserine. In terms of domain architecture, BTB spans 33 to 100 (IDCTLKAGDK…LYSASIDLND (68 aa)). The region spanning 135–237 (CLAILRLGLL…AEKYFKDHVE (103 aa)) is the BACK domain. Kelch repeat units lie at residues 346 to 398 (QVYV…EVDD), 399 to 447 (KIYV…SHNG), 448 to 495 (MIYC…IHKG), 497 to 542 (IVIA…SLAG), and 544 to 599 (LYAI…TRLN).

In terms of assembly, interacts with NRAP. Part of a complex that contains CUL3, RBX1 and KLHL41. Interacts with LASP1. Ubiquitinated by E3 ubiquitin ligase complex formed by CUL3 and RBX1 and probably targeted for proteasome-independent degradation. Quinone-induced oxidative stress increases its ubiquitination. In terms of tissue distribution, skeletal muscle. Localized between laterally fusing myofibrils in skeletal muscle (at protein level). Expressed at a lower level in the heart compared to skeletal muscle.

Its subcellular location is the cytoplasm. The protein resides in the cytoskeleton. It is found in the cell projection. It localises to the pseudopodium. The protein localises to the ruffle. Its subcellular location is the myofibril. The protein resides in the sarcomere. It is found in the m line. It localises to the sarcoplasmic reticulum membrane. The protein localises to the endoplasmic reticulum membrane. Its function is as follows. Involved in skeletal muscle development and differentiation. Regulates proliferation and differentiation of myoblasts and plays a role in myofibril assembly by promoting lateral fusion of adjacent thin fibrils into mature, wide myofibrils. Required for pseudopod elongation in transformed cells. This Mus musculus (Mouse) protein is Kelch-like protein 41 (Klhl41).